The primary structure comprises 127 residues: Putative pre-16S rRNA nuclease (127 aa).

It belongs to the YqgF nuclease family.

Its subcellular location is the cytoplasm. Functionally, could be a nuclease involved in processing of the 5'-end of pre-16S rRNA. This Campylobacter jejuni subsp. jejuni serotype O:6 (strain 81116 / NCTC 11828) protein is Putative pre-16S rRNA nuclease.